We begin with the raw amino-acid sequence, 491 residues long: GTPase Der (491 aa).

Residues 3–166 (PVIALVGRPN…AALGIFPRDD (164 aa)) enclose the EngA-type G 1 domain. GTP-binding positions include 9 to 16 (GRPNVGKS), 56 to 60 (DTGGI), and 118 to 121 (NKVD). The segment at 164–191 (RDDEGEEGEGEAEVVAEGEEPKRVPGPS) is disordered. Acidic residues predominate over residues 166-181 (DEGEEGEGEAEVVAEG). Residues 182–191 (EEPKRVPGPS) show a composition bias toward basic and acidic residues. The EngA-type G 2 domain maps to 196 to 369 (IKIAIIGRPN…SVQAAFQSAV (174 aa)). GTP-binding positions include 202 to 209 (GRPNVGKS), 249 to 253 (DTAGV), and 314 to 317 (NKWD). Positions 370 to 454 (TRWPTSRLTR…PIRIEYKGGD (85 aa)) constitute a KH-like domain. The span at 452–464 (GGDNPYEGKKNSL) shows a compositional bias: basic and acidic residues. The interval 452 to 491 (GGDNPYEGKKNSLTERQVNKKRRLMSHHKKAEKKRRDKKR) is disordered. Residues 470–491 (NKKRRLMSHHKKAEKKRRDKKR) show a composition bias toward basic residues.

It belongs to the TRAFAC class TrmE-Era-EngA-EngB-Septin-like GTPase superfamily. EngA (Der) GTPase family. Associates with the 50S ribosomal subunit.

Functionally, GTPase that plays an essential role in the late steps of ribosome biogenesis. This chain is GTPase Der, found in Azotobacter vinelandii (strain DJ / ATCC BAA-1303).